We begin with the raw amino-acid sequence, 372 residues long: Partitioning defective 6 homolog beta (372 aa).

Residue Ser-11 is modified to Phosphoserine. The PB1 domain occupies 16–96 (TMEVKSKFGA…PLLRIFIQKK (81 aa)). An interaction with PARD3 and CDC42 region spans residues 126–253 (RKKPHIVISM…ITVRPANQRN (128 aa)). One can recognise a Pseudo-CRIB domain in the interval 133-150 (ISMPQDFRPVSSIIDVDI). Residues 157 to 250 (RVRLYKYGTE…NLIITVRPAN (94 aa)) enclose the PDZ domain. Residues 253–272 (NNVVRNSRTSGSSGQSTDNS) show a composition bias toward polar residues. The tract at residues 253-292 (NNVVRNSRTSGSSGQSTDNSLLGYPQQIEPSFEPEDEDSE) is disordered.

Belongs to the PAR6 family. As to quaternary structure, interacts with PARD3. Interacts with GTP-bound forms of CDC42 and RAC1. Interacts with GTP-bound RHOQ/TC10. Interacts with PALS1. Interacts with the N-terminal part of PRKCI and PRKCZ. Part of a complex with PARD3, CDC42 or RAC1 and PRKCI or PRKCZ. Part of a complex with LLGL1 and PRKCI. Interacts with PARD3B. Interacts with ECT2. Expressed in pancreas and in both adult and fetal kidney. Weakly expressed in placenta and lung. Not expressed in other tissues.

Its subcellular location is the cytoplasm. It localises to the cell membrane. The protein resides in the cell junction. It is found in the tight junction. Adapter protein involved in asymmetrical cell division and cell polarization processes. Probably involved in formation of epithelial tight junctions. Association with PARD3 may prevent the interaction of PARD3 with F11R/JAM1, thereby preventing tight junction assembly. The PARD6-PARD3 complex links GTP-bound Rho small GTPases to atypical protein kinase C proteins. The sequence is that of Partitioning defective 6 homolog beta (PARD6B) from Homo sapiens (Human).